A 385-amino-acid chain; its full sequence is Period circadian protein (385 aa).

3 disordered regions span residues 28–121, 169–189, and 322–351; these read TAPV…VPPV, GPGP…WEGE, and SPAS…TSQG. The segment covering 71–93 has biased composition (low complexity); the sequence is SGNFTTGSNLHMSSVTNTSNAGT. The segment covering 94-115 has biased composition (gly residues); sequence GTSGTGNSGDGGGGGAGDGPGS. Polar residues predominate over residues 340–351; it reads HPSSEQPSTSQG.

In terms of assembly, forms a heterodimer with timeless (TIM); the complex then translocates into the nucleus. Post-translationally, phosphorylated with a circadian rhythmicity, probably by the double-time protein (dbt). Phosphorylation could be implicated in the stability of per monomer and in the formation of heterodimer per-tim.

The protein localises to the nucleus. Its subcellular location is the cytoplasm. It is found in the perinuclear region. In terms of biological role, essential for biological clock functions. Determines the period length of circadian and ultradian rhythms; an increase in PER dosage leads to shortened circadian rhythms and a decrease leads to lengthened circadian rhythms. Essential for the circadian rhythmicity of locomotor activity, eclosion behavior, and for the rhythmic component of the male courtship song that originates in the thoracic nervous system. The biological cycle depends on the rhythmic formation and nuclear localization of the TIM-PER complex. Light induces the degradation of TIM, which promotes elimination of PER. Nuclear activity of the heterodimer coordinatively regulates PER and TIM transcription through a negative feedback loop. Behaves as a negative element in circadian transcriptional loop. Does not appear to bind DNA, suggesting indirect transcriptional inhibition. In Drosophila nebulosa (Fruit fly), this protein is Period circadian protein (per).